Consider the following 39-residue polypeptide: Photosystem II reaction center protein J (39 aa).

The chain crosses the membrane as a helical span at residues 7–27; the sequence is IPLWIVATVAGTGALVVVGLF.

Belongs to the PsbJ family. PSII is composed of 1 copy each of membrane proteins PsbA, PsbB, PsbC, PsbD, PsbE, PsbF, PsbH, PsbI, PsbJ, PsbK, PsbL, PsbM, PsbT, PsbX, PsbY, PsbZ, Psb30/Ycf12, peripheral proteins PsbO, CyanoQ (PsbQ), PsbU, PsbV and a large number of cofactors. It forms dimeric complexes.

Its subcellular location is the cellular thylakoid membrane. One of the components of the core complex of photosystem II (PSII). PSII is a light-driven water:plastoquinone oxidoreductase that uses light energy to abstract electrons from H(2)O, generating O(2) and a proton gradient subsequently used for ATP formation. It consists of a core antenna complex that captures photons, and an electron transfer chain that converts photonic excitation into a charge separation. This Synechococcus sp. (strain ATCC 27144 / PCC 6301 / SAUG 1402/1) (Anacystis nidulans) protein is Photosystem II reaction center protein J.